The primary structure comprises 362 residues: Probable protein phosphatase 2C 24 (362 aa).

The region spanning 77–360 (RYGVSSVCGR…DNVSVVVIDL (284 aa)) is the PPM-type phosphatase domain. Mn(2+)-binding residues include D117, G118, D295, and D351.

It belongs to the PP2C family. Requires Mg(2+) as cofactor. Mn(2+) serves as cofactor.

It catalyses the reaction O-phospho-L-seryl-[protein] + H2O = L-seryl-[protein] + phosphate. The enzyme catalyses O-phospho-L-threonyl-[protein] + H2O = L-threonyl-[protein] + phosphate. The polypeptide is Probable protein phosphatase 2C 24 (Arabidopsis thaliana (Mouse-ear cress)).